A 444-amino-acid chain; its full sequence is UDP-N-acetylglucosamine 1-carboxyvinyltransferase (444 aa).

22–23 (KN) provides a ligand contact to phosphoenolpyruvate. Arginine 94 contributes to the UDP-N-acetyl-alpha-D-glucosamine binding site. The active-site Proton donor is the aspartate 119. UDP-N-acetyl-alpha-D-glucosamine contacts are provided by aspartate 309 and valine 331.

The protein belongs to the EPSP synthase family. MurA subfamily.

It localises to the cytoplasm. It catalyses the reaction phosphoenolpyruvate + UDP-N-acetyl-alpha-D-glucosamine = UDP-N-acetyl-3-O-(1-carboxyvinyl)-alpha-D-glucosamine + phosphate. It participates in cell wall biogenesis; peptidoglycan biosynthesis. Its function is as follows. Cell wall formation. Adds enolpyruvyl to UDP-N-acetylglucosamine. This Chlamydia trachomatis serovar A (strain ATCC VR-571B / DSM 19440 / HAR-13) protein is UDP-N-acetylglucosamine 1-carboxyvinyltransferase.